The sequence spans 389 residues: SH2 domain-containing protein 2A (389 aa).

The interval 41-63 is disordered; that stretch reads AASPQAPEAASNTGNAERAEEVP. In terms of domain architecture, SH2 spans 95–186; that stretch reads WFHGFITRRE…PYGETLTEPL (92 aa). The tract at residues 190–295 is disordered; sequence TPEPAGLSLR…PIAFYAMGRG (106 aa). Over residues 203 to 216 the composition is skewed to polar residues; it reads SNFGSKSQDPNPQY. Ser-217 carries the phosphoserine modification. 2 short sequence motifs (SH3-binding) span residues 244-250 and 272-278; these read RPKPPIP and RPKPSNP. The span at 245 to 256 shows a compositional bias: pro residues; it reads PKPPIPAKPQLP. Phosphoserine is present on Ser-296. The segment at 324–389 is disordered; the sequence is KSWSRPVPGG…QAWLPLGPPQ (66 aa). A compositionally biased stretch (polar residues) spans 337 to 348; it reads GGSQLHSENSVI. The span at 352–361 shows a compositional bias: pro residues; the sequence is PPLPHQPPPA.

As to quaternary structure, interacts with KDR. Interacts with TXK and ITK. Phosphorylated on tyrosine residues. In terms of tissue distribution, expression limited to tissues of the immune system and, in particular, activated T-cells. Expressed in peripheral blood leukocytes, thymus and spleen. Much lower expression or undetectable, in brain, placenta, skeletal muscle, prostate, testis, ovary, small intestine, and colon. Expressed at low levels in unstimulated T-cells, but not expressed in normal resting or activated B-cells. According to PubMed:10692392, expression is not restricted to activated T-cells, but strongly expressed in blood cell lineages, the endothelium and other cell and tissue types, such as heart, lung, and liver.

Its subcellular location is the cytoplasm. Its function is as follows. Could be a T-cell-specific adapter protein involved in the control of T-cell activation. May play a role in the CD4-p56-LCK-dependent signal transduction pathway. Could also play an important role in normal and pathological angiogenesis. Could be an adapter protein that facilitates and regulates interaction of KDR with effector proteins important to endothelial cell survival and proliferation. The chain is SH2 domain-containing protein 2A (SH2D2A) from Homo sapiens (Human).